Reading from the N-terminus, the 499-residue chain is MRILILNPPHPAIGSRIPKEQLPPLGLLSIGGPLLDAGHDVTLLDAEFGPLTDSEIVERVCAHCPQLLLIGHSGSTSAHPIVCRLTLFLRERLPNLIIVYGGVFPTYHFHDILTKEPQIDFIVRGEGEATVAKLIAALENHNDLNKVDGIAFRRDEQIIETLPAPMIQDLDVYRVGWELVDLKKYSYYGGKQAVVIQFSRGCPHLCNYCGQRGFWARWRHRDPKKFAQEIVWLHRTHGVQLFNLADENPTVNKAIWQEFCEAIIAENISITIIGSTRADDIVRDADILHLYRRAGVERFLLGMENTNEATLKHIRKGSKTSTDREAIRLLRQHNILSLATWVTDFEEVRDRDFIQALKQLLYYDPDQIMSLYVTPHRWTSFYGIASERRVIQLDQTKWDYKHQVLAATHMPPWRIFLWVKLIEILLQTRPKALWRLLFQPNKASRRGMYWFTLMGRRVLVHELINFFFGDRRVKNGPTLQEFWGMPQEHQEIPLSITRK.

The B12-binding domain maps to 9-145; it reads PHPAIGSRIP…AALENHNDLN (137 aa). Residues 188–420 enclose the Radical SAM core domain; sequence YGGKQAVVIQ…PPWRIFLWVK (233 aa). [4Fe-4S] cluster-binding residues include Cys202, Cys206, and Cys209.

Belongs to the BchE family. Requires [4Fe-4S] cluster as cofactor. Adenosylcob(III)alamin is required as a cofactor.

The catalysed reaction is Mg-protoporphyrin IX 13-monomethyl ester + 3 S-adenosyl-L-methionine + H2O = 3,8-divinyl protochlorophyllide a + 3 5'-deoxyadenosine + 3 L-methionine + 4 H(+). The protein operates within porphyrin-containing compound metabolism; bacteriochlorophyll biosynthesis (light-independent). Functionally, involved in the tetrapyrrole biosynthetic pathways leading to chlorophyll and bacteriochlorophyll (BChl). Catalyzes the anaerobic formation of the isocyclic ring (E-ring) in Mg-protoporphyrin monomethyl ester (MPE) to yield protochlorophyllide a (PChlide a) via a six-electron oxidation and the formation of an oxo group at position C13 using oxygen from a water molecule. The chain is Anaerobic magnesium-protoporphyrin IX monomethyl ester cyclase from Synechocystis sp. (strain ATCC 27184 / PCC 6803 / Kazusa).